Consider the following 328-residue polypeptide: MTQAPVTVTVTGAAGQIGYALLFRIASGQLIGPDTPVRLRLLEIPQAVKAAEGTAMELDDCAFPLLQGIEVTDDARTAFDGTNVALLVGARPRTKGMERGDLLEANGGIFKPQGEAINAGAADDVRVLVVGNPANTNALIAQAHAPDVPAERFTAMTRLDHNRALTQLAQKLGVSVNDIKKLTIWGNHSATQYPDLFHAEVNGKVAAEQVDQAWLADTFIPTVAKRGAAIIEARGASSAASAANAAIDHIHTWVNGTPEGDWTSAAVVSDGSYGVPEGLISSFPVVARDGRYEIVQGLEIDEFSRQRIDASVNELSEERDAVRKLGLL.

Residue 12–18 (GAAGQIG) participates in NAD(+) binding. Positions 93 and 99 each coordinate substrate. NAD(+) is bound by residues N106, Q113, and 130–132 (VGN). Residues N132 and R163 each coordinate substrate. H188 acts as the Proton acceptor in catalysis.

It belongs to the LDH/MDH superfamily. MDH type 2 family.

The enzyme catalyses (S)-malate + NAD(+) = oxaloacetate + NADH + H(+). In terms of biological role, catalyzes the reversible oxidation of malate to oxaloacetate. The protein is Malate dehydrogenase of Saccharopolyspora erythraea (strain ATCC 11635 / DSM 40517 / JCM 4748 / NBRC 13426 / NCIMB 8594 / NRRL 2338).